The primary structure comprises 443 residues: Glucose-6-phosphate isomerase (443 aa).

Catalysis depends on Glu285, which acts as the Proton donor. Residues His306 and Lys420 contribute to the active site.

This sequence belongs to the GPI family.

The protein resides in the cytoplasm. It carries out the reaction alpha-D-glucose 6-phosphate = beta-D-fructose 6-phosphate. It functions in the pathway carbohydrate biosynthesis; gluconeogenesis. Its pathway is carbohydrate degradation; glycolysis; D-glyceraldehyde 3-phosphate and glycerone phosphate from D-glucose: step 2/4. Catalyzes the reversible isomerization of glucose-6-phosphate to fructose-6-phosphate. The protein is Glucose-6-phosphate isomerase of Staphylococcus aureus (strain Mu3 / ATCC 700698).